The following is a 914-amino-acid chain: MSETQKENPYSSTVLLPKTDFPMKADLAKREPEQIRSWKQNRIFRKMREQRSGKKEFVLHDGPPYANGNFHLGHALNKILKDTIIKSKSLAGFYADMIPGWDCHGLPIEVQVLKNLGKKVRETGPEELRQLCRKYAEEFVGKQGDDLSRFLCFWDEGRIYKTMSPDFEAKIVEVFGELFKKGYVYRGKKPVYWSIDLATAHAEAEIEYYPHISPSIYVKFPIIGEKKRFCLIWTTTPWTLPANLAICFNRKIEYSIFKTESSEELILADALAENVTITTGVALTKLKPITSEELAALKFQHPFVDRISVSLFGDHVTLEAGTGCVHTAPGHGQDDYKVGLAAGLEPFSPVDDYGRYTDEFPLMQGKKVFDANPEIIQLLRDKGLLLYHGELEHSYPHSWRSKKPLIFRATPQWFFKIDFQDLREKSLSAIDGVRWIPSWGITRIRSMVETRPDWCLSRQRNWGVPIPAFTCESCGQTHIDDASIQFFTKMVREKGIEIWYSEETKDLLPPKTKCGKCGNDSFKKGNDILDVWFDSGVSNFSVLGERKDEPPADLYLEGSDQHRGWFQSSLWPSMALRGIPPYKAVLTHGYVLDEKGRAMSKSLGNGIDPTADIIQVYGADILRLWVSSLDFRDDIKVGKESLKIVSEQYRKIRNTFRYLLGNLDGHTPEQNLPFEELEELDRFYLSKLAGFVEDAVASYETYQFHQIYQKLILFCTVTLSQDYFDMIRDRMYCDLRDSKSRRSSSTALQYILDSLCILVAPILSFTAEEVWTSNGKKDSVFLQTFPDLKSWKNQSLEDKFESALQAREVVQKALEIARQEGKLGKSLEAALEIVSKSGLSFGELLPKETLELLFVVSQIHEENPGMEVLSSHENEKFSVKVLKPLQGECPRCWRHTEDISKEGDLCGRCKSVVA.

A 'HIGH' region motif is present at residues 64–74 (PYANGNFHLGH). Glu-557 lines the L-isoleucyl-5'-AMP pocket. Positions 598-602 (AMSKS) match the 'KMSKS' region motif. Residue Lys-601 participates in ATP binding. Residues Cys-889, Cys-892, Cys-906, and Cys-909 each contribute to the Zn(2+) site.

This sequence belongs to the class-I aminoacyl-tRNA synthetase family. IleS type 1 subfamily. Monomer. Zn(2+) serves as cofactor.

The protein resides in the cytoplasm. The catalysed reaction is tRNA(Ile) + L-isoleucine + ATP = L-isoleucyl-tRNA(Ile) + AMP + diphosphate. Its function is as follows. Catalyzes the attachment of isoleucine to tRNA(Ile). As IleRS can inadvertently accommodate and process structurally similar amino acids such as valine, to avoid such errors it has two additional distinct tRNA(Ile)-dependent editing activities. One activity is designated as 'pretransfer' editing and involves the hydrolysis of activated Val-AMP. The other activity is designated 'posttransfer' editing and involves deacylation of mischarged Val-tRNA(Ile). The polypeptide is Isoleucine--tRNA ligase (Leptospira borgpetersenii serovar Hardjo-bovis (strain JB197)).